Here is a 478-residue protein sequence, read N- to C-terminus: MKLKAKYKQQSKVGKVVQVVSAVVDVSFAGKDLPHILNALECTINNEKIVLEVVQHIGDDIVRCLAMNSTDGLFRGAEVIDTGEQIKVPVGKSILGRILNVVGQPIDDLGPIKCDNFSQIHKDAPKFINQSTSRKILITGIKVIDLLTPYISGGKIGLFGGAGVGKTVLIMEIINNVAKAYKGYTVFTGVGERTREGGDLYKEMVGSNIIDLNKLENSKVTLVFGQMNEPPGARARVALTGLTIAESFRDMNEGEVLLFIDNIFRFTQAGAEISTLLGRIPSAVGYQPTLATDIGSLQERITSTKFGAITSIQAIYVPADDLTDPAPVACFAHLDATTVLSRKIAELGIYPAVDPLNSSSQILDANVIGQEHYSVATKVQEILQTYKSLQDVIAILGVDELSDDEKRIVSRARKIQRFLTQPFHVAEVFTGKQGRFVSLEDTIYGFKGLIEGKYDDLPEMAFYMVGSIDEAIEKSKTL.

160-167 lines the ATP pocket; that stretch reads GGAGVGKT.

The protein belongs to the ATPase alpha/beta chains family. F-type ATPases have 2 components, CF(1) - the catalytic core - and CF(0) - the membrane proton channel. CF(1) has five subunits: alpha(3), beta(3), gamma(1), delta(1), epsilon(1). CF(0) has three main subunits: a(1), b(2) and c(9-12). The alpha and beta chains form an alternating ring which encloses part of the gamma chain. CF(1) is attached to CF(0) by a central stalk formed by the gamma and epsilon chains, while a peripheral stalk is formed by the delta and b chains.

The protein localises to the cell inner membrane. The catalysed reaction is ATP + H2O + 4 H(+)(in) = ADP + phosphate + 5 H(+)(out). In terms of biological role, produces ATP from ADP in the presence of a proton gradient across the membrane. The catalytic sites are hosted primarily by the beta subunits. This is ATP synthase subunit beta from Orientia tsutsugamushi (strain Ikeda) (Rickettsia tsutsugamushi).